A 31-amino-acid polypeptide reads, in one-letter code: Cliotide T14 (31 aa).

The segment at residues 1–31 (DTIPCGESCVWIPCISSILGCSCKDKVCYHN) is a cross-link (cyclopeptide (Asp-Asn)). Disulfide bonds link Cys-5–Cys-21, Cys-9–Cys-23, and Cys-14–Cys-28.

In terms of processing, contains 3 disulfide bonds. Post-translationally, this is a cyclic peptide. As to expression, expressed in seed but not in root nodules.

In terms of biological role, probably participates in a plant defense mechanism. Not active against Gram-negative bacterium E.coli ATCC 700926 or Gram-positive bacterium S.aureus ATCC 12600 up to a concentration of 100 uM under low-salt conditions. The protein is Cliotide T14 of Clitoria ternatea (Butterfly pea).